The following is a 286-amino-acid chain: 2,3,4,5-tetrahydropyridine-2,6-dicarboxylate N-succinyltransferase (286 aa).

Arg109 and Asp146 together coordinate substrate.

The protein belongs to the transferase hexapeptide repeat family. In terms of assembly, homotrimer.

It is found in the cytoplasm. It catalyses the reaction (S)-2,3,4,5-tetrahydrodipicolinate + succinyl-CoA + H2O = (S)-2-succinylamino-6-oxoheptanedioate + CoA. It functions in the pathway amino-acid biosynthesis; L-lysine biosynthesis via DAP pathway; LL-2,6-diaminopimelate from (S)-tetrahydrodipicolinate (succinylase route): step 1/3. The protein is 2,3,4,5-tetrahydropyridine-2,6-dicarboxylate N-succinyltransferase of Bartonella tribocorum (strain CIP 105476 / IBS 506).